The chain runs to 317 residues: Transaldolase (317 aa).

Lys132 acts as the Schiff-base intermediate with substrate in catalysis.

The protein belongs to the transaldolase family. Type 1 subfamily. Homodimer.

The protein localises to the cytoplasm. The enzyme catalyses D-sedoheptulose 7-phosphate + D-glyceraldehyde 3-phosphate = D-erythrose 4-phosphate + beta-D-fructose 6-phosphate. It participates in carbohydrate degradation; pentose phosphate pathway; D-glyceraldehyde 3-phosphate and beta-D-fructose 6-phosphate from D-ribose 5-phosphate and D-xylulose 5-phosphate (non-oxidative stage): step 2/3. In terms of biological role, transaldolase is important for the balance of metabolites in the pentose-phosphate pathway. In Mannheimia succiniciproducens (strain KCTC 0769BP / MBEL55E), this protein is Transaldolase.